Reading from the N-terminus, the 163-residue chain is MISFNLTSIVNLVGFLAFMFLMYRLLYKPYFDMTDKRKKEVEKNLNEAEKLRLEAQLKKEELDKQLSEADEKRREILSEADEQAKSIIKAAQGEAQEQRKFILDKAEKEAEEIKESAARELQSRIVSLAVTISSMILKEQIDKKKNEELIRRAINSLKDKGEL.

A helical transmembrane segment spans residues 1-21 (MISFNLTSIVNLVGFLAFMFL).

This sequence belongs to the ATPase B chain family. In terms of assembly, F-type ATPases have 2 components, F(1) - the catalytic core - and F(0) - the membrane proton channel. F(1) has five subunits: alpha(3), beta(3), gamma(1), delta(1), epsilon(1). F(0) has three main subunits: a(1), b(2) and c(10-14). The alpha and beta chains form an alternating ring which encloses part of the gamma chain. F(1) is attached to F(0) by a central stalk formed by the gamma and epsilon chains, while a peripheral stalk is formed by the delta and b chains.

Its subcellular location is the cell inner membrane. Its function is as follows. F(1)F(0) ATP synthase produces ATP from ADP in the presence of a proton or sodium gradient. F-type ATPases consist of two structural domains, F(1) containing the extramembraneous catalytic core and F(0) containing the membrane proton channel, linked together by a central stalk and a peripheral stalk. During catalysis, ATP synthesis in the catalytic domain of F(1) is coupled via a rotary mechanism of the central stalk subunits to proton translocation. In terms of biological role, component of the F(0) channel, it forms part of the peripheral stalk, linking F(1) to F(0). This Petrotoga mobilis (strain DSM 10674 / SJ95) protein is ATP synthase subunit b.